Here is a 485-residue protein sequence, read N- to C-terminus: Delta(14)-sterol reductase ERG24A (485 aa).

4 consecutive transmembrane segments (helical) span residues 18–38 (FFGPPGAFAISFFLPVLVYVF), 77–97 (GLVSWNGTLAVIGYNVLSLIL), 131–151 (LAVLAAGTIAQGAEFPVWTFM), and 155–175 (FIQILSANIIYSYLVSTFVYV). N-linked (GlcNAc...) asparagine glycosylation is present at asparagine 240. The next 4 membrane-spanning stretches (helical) occupy residues 259–279 (ILITAVQALYVFDSWWNEPAI), 285–305 (ITTDGFGMMLAFGDIVWVPYV), 319–339 (SLGPLGLAAMLGLIGLGFYIF), and 431–451 (AQGWGMLITYFYILYFGILLI).

Belongs to the ERG4/ERG24 family.

It is found in the endoplasmic reticulum membrane. It catalyses the reaction 4,4-dimethyl-5alpha-cholesta-8,24-dien-3beta-ol + NADP(+) = 4,4-dimethyl-5alpha-cholesta-8,14,24-trien-3beta-ol + NADPH + H(+). Its pathway is steroid metabolism; ergosterol biosynthesis. In terms of biological role, delta(14)-sterol reductase; part of the third module of ergosterol biosynthesis pathway that includes the late steps of the pathway. Catalyzes the reduction of the C14=C15 double bond within 4,4,24-trimethyl ergosta-8,14,24(28)-trienolto produce 4,4-dimethylfecosterol. The third module or late pathway involves the ergosterol synthesis itself through consecutive reactions that mainly occur in the endoplasmic reticulum (ER) membrane. Firstly, the squalene synthase ERG9 catalyzes the condensation of 2 farnesyl pyrophosphate moieties to form squalene, which is the precursor of all steroids. Squalene synthase is crucial for balancing the incorporation of farnesyl diphosphate (FPP) into sterol and nonsterol isoprene synthesis. Secondly, squalene is converted into lanosterol by the consecutive action of the squalene epoxidase ERG1 and the lanosterol synthase ERG7. Then, the delta(24)-sterol C-methyltransferase ERG6 methylates lanosterol at C-24 to produce eburicol. Eburicol is the substrate of the sterol 14-alpha demethylase encoded by CYP51A, CYP51B and CYP51C, to yield 4,4,24-trimethyl ergosta-8,14,24(28)-trienol. CYP51B encodes the enzyme primarily responsible for sterol 14-alpha-demethylation, and plays an essential role in ascospore formation. CYP51A encodes an additional sterol 14-alpha-demethylase, induced on ergosterol depletion and responsible for the intrinsic variation in azole sensitivity. The third CYP51 isoform, CYP51C, does not encode a sterol 14-alpha-demethylase, but is required for full virulence on host wheat ears. The C-14 reductase ERG24 then reduces the C14=C15 double bond which leads to 4,4-dimethylfecosterol. A sequence of further demethylations at C-4, involving the C-4 demethylation complex containing the C-4 methylsterol oxidases ERG25, the sterol-4-alpha-carboxylate 3-dehydrogenase ERG26 and the 3-keto-steroid reductase ERG27, leads to the production of fecosterol via 4-methylfecosterol. ERG28 has a role as a scaffold to help anchor ERG25, ERG26 and ERG27 to the endoplasmic reticulum. The C-8 sterol isomerase ERG2 then catalyzes the reaction which results in unsaturation at C-7 in the B ring of sterols and thus converts fecosterol to episterol. The sterol-C5-desaturases ERG3A and ERG3BB then catalyze the introduction of a C-5 double bond in the B ring to produce 5-dehydroepisterol. The C-22 sterol desaturases ERG5A and ERG5B further convert 5-dehydroepisterol into ergosta-5,7,22,24(28)-tetraen-3beta-ol by forming the C-22(23) double bond in the sterol side chain. Finally, ergosta-5,7,22,24(28)-tetraen-3beta-ol is substrate of the C-24(28) sterol reductase ERG4 to produce ergosterol. The chain is Delta(14)-sterol reductase ERG24A from Gibberella zeae (strain ATCC MYA-4620 / CBS 123657 / FGSC 9075 / NRRL 31084 / PH-1) (Wheat head blight fungus).